Here is a 135-residue protein sequence, read N- to C-terminus: Large ribosomal subunit protein eL32 (135 aa).

The segment at 51-77 (GRDNKFRLKMKGKPRPPEPGYRSPRKV) is disordered.

Belongs to the eukaryotic ribosomal protein eL32 family.

This chain is Large ribosomal subunit protein eL32 (rpl32e), found in Nanoarchaeum equitans (strain Kin4-M).